A 49-amino-acid polypeptide reads, in one-letter code: Fungus-induced-related protein 16 (49 aa).

The chain is Fungus-induced-related protein 16 (fipr-16) from Caenorhabditis elegans.